Consider the following 299-residue polypeptide: Ribonuclease Z (299 aa).

Positions 60, 62, 64, 65, 137, 207, and 265 each coordinate Zn(2+). Catalysis depends on Asp-64, which acts as the Proton acceptor.

Belongs to the RNase Z family. As to quaternary structure, homodimer. Zn(2+) serves as cofactor.

It catalyses the reaction Endonucleolytic cleavage of RNA, removing extra 3' nucleotides from tRNA precursor, generating 3' termini of tRNAs. A 3'-hydroxy group is left at the tRNA terminus and a 5'-phosphoryl group is left at the trailer molecule.. Functionally, zinc phosphodiesterase, which displays some tRNA 3'-processing endonuclease activity. Probably involved in tRNA maturation, by removing a 3'-trailer from precursor tRNA. The polypeptide is Ribonuclease Z (Nitrosopumilus maritimus (strain SCM1)).